The following is a 90-amino-acid chain: MKFLAVLVLLGVSIFLVSAQNPTTAAPADTYPATGPADDEAPDAETTAAATTATTAAPTTATTAASTTARKDIPVLPKWVGDLPNGRVCP.

A signal peptide spans 1–20 (MKFLAVLVLLGVSIFLVSAQ). Residues threonine 23, threonine 24, threonine 30, threonine 34, threonine 46, threonine 47, threonine 51, threonine 52, threonine 54, threonine 55, threonine 59, threonine 60, threonine 62, and threonine 63 are each glycosylated (O-linked (GalNAc...) threonine). Low complexity-rich tracts occupy residues 25 to 36 (AAPADTYPATGP) and 44 to 68 (AETT…ASTT). The disordered stretch occupies residues 25-68 (AAPADTYPATGPADDEAPDAETTAAATTATTAAPTTATTAASTT). A run of 3 repeats spans residues 46-53 (TTAAATTA), 54-61 (TTAAPTTA), and 62-69 (TTAASTTA). The 3 X 8 AA tandem repeat of T-T-A-A-[APS]-T-T-A stretch occupies residues 46 to 69 (TTAAATTATTAAPTTATTAASTTA). Serine 66 carries O-linked (GalNAc...) serine glycosylation. Residues threonine 67 and threonine 68 are each glycosylated (O-linked (GalNAc...) threonine).

O-glycosylated. In terms of tissue distribution, expressed in mammary, salivary glands and prostate. Also detected in lung. Mainly expressed in cancer cell lines of breast origin. Highly expressed in lymph node-positive compared with node-negative tumors. Detected in all lymph node containing metastatic cells.

It is found in the secreted. It localises to the membrane. Its function is as follows. May play a role as marker for the diagnosis of metastatic breast cancer. This is Mucin-like protein 1 (MUCL1) from Homo sapiens (Human).